The primary structure comprises 470 residues: GTPase grn1 (470 aa).

The segment covering 1-16 (MVSLKKKSKRRTTRLR) has biased composition (basic residues). The tract at residues 1-56 (MVSLKKKSKRRTTRLRSRIEKKAAESKRKQKRADKKNPQWKSRIPKDPGIPNSFPY) is disordered. Residues 17-27 (SRIEKKAAESK) are compositionally biased toward basic and acidic residues. The region spanning 153–333 (DKEFKKVVEA…LVDSPGIVFP (181 aa)) is the CP-type G domain. GTP-binding positions include 202 to 205 (NKID), 276 to 283 (GYPNVGKS), and 326 to 329 (DSPG). An RNA-binding region spans residues 405–415 (ARKRGRLGRGG).

This sequence belongs to the TRAFAC class YlqF/YawG GTPase family.

It is found in the nucleus. The protein localises to the nucleolus. Functionally, required for optimal growth. Required for normal processing of ribosomal pre-rRNA. Required for nuclear export of ribosomal protein rpl2501. The chain is GTPase grn1 from Schizosaccharomyces pombe (strain 972 / ATCC 24843) (Fission yeast).